Here is a 788-residue protein sequence, read N- to C-terminus: MLSLLKRAIGYTNERQLKKYMRVVEQINRMEPQMEKLTDAELRRKTDEFKEQLASGKSVNDIQVEAFAVVREVAKRVLGMRHFDVQLIGGLVLAEGNIAEMATGEGKTLVASLPSYLRALEGKGVHVITANDYLAKRDRNLIGQIHEFLGLTVGLNLPLMSPQEKKQAYQADITYGIGTEFGFDYLRDHMVYDASDKVQRPYHYAIIDEIDSVLIDEAKTPLIIAGKTRSSTELHYIAARLVKRFEREVDYIYDGETKTVNLTDEGIEKVEKAFGIDNLYDAEHQVLYHYVIQALRAHVLFQRDVDYIIRDGKVLLVDAFTGRVMEGRSLSDGLHQAIEAKEGLEITEENKTYASITIQNYFRMYPILSGMTGTAKTEEKEFQRIYGIDVIPIPTNRPKIRVDLPDRVYMTRHDKYVAVAKEVKRRHESGQPVLIGTTSILQSEEVAKYLDQEQVPYELLNAKTVEQEAEVIARAGQRGRVTIATNIAGRGTDILLGEGVNELGGLHVLGTERHESRRIDNQLKGRAGRQGDPGSSQFFISLEDDMFRRFAAEETEKLKAKLKTDETGCILNNDIHEFVDKVQRIVEGMNFSVREYNLKLDDVMNEQRNVIYQIRDRVLEENDRVALVVPMIRSACDRIVDAYALSEQIPEEWDVRRMTEELNRIVYRTPITFDQPPADLEDVKRKVAEAVESYVALLEKKKAHTQLQTLLKSVMLTVIDDYWMRHLDQMALLKEGIGLRHYQQEDPIRLYQKEGFEMFKAMYEVIEKEISVHTARLLQSLEQEEGQS.

Residues Q86, 104 to 108 (GEGKT), and D493 each bind ATP.

This sequence belongs to the SecA family. Monomer and homodimer. Part of the essential Sec protein translocation apparatus which comprises SecA, SecYEG and auxiliary proteins SecDF. Other proteins may also be involved.

Its subcellular location is the cell membrane. It is found in the cytoplasm. The catalysed reaction is ATP + H2O + cellular proteinSide 1 = ADP + phosphate + cellular proteinSide 2.. Part of the Sec protein translocase complex. Interacts with the SecYEG preprotein conducting channel. Has a central role in coupling the hydrolysis of ATP to the transfer of proteins into and across the cell membrane, serving as an ATP-driven molecular motor driving the stepwise translocation of polypeptide chains across the membrane. The protein is Protein translocase subunit SecA 2 of Geobacillus thermodenitrificans (strain NG80-2).